A 460-amino-acid polypeptide reads, in one-letter code: Argininosuccinate lyase (460 aa).

This sequence belongs to the lyase 1 family. Argininosuccinate lyase subfamily.

It is found in the cytoplasm. It carries out the reaction 2-(N(omega)-L-arginino)succinate = fumarate + L-arginine. It functions in the pathway amino-acid biosynthesis; L-arginine biosynthesis; L-arginine from L-ornithine and carbamoyl phosphate: step 3/3. The chain is Argininosuccinate lyase from Lawsonia intracellularis (strain PHE/MN1-00).